The sequence spans 68 residues: MDPETCPCPSGGSCTCADSCKCEGCKCTSCKKSCCSCCPAECEKCAKDCVCKGGEAAEAEAEKCSCCQ.

The residue at position 1 (methionine 1) is an N-acetylmethionine. The interval 1–30 (MDPETCPCPSGGSCTCADSCKCEGCKCTSC) is beta. A divalent metal cation-binding residues include cysteine 6, cysteine 8, cysteine 14, cysteine 16, cysteine 20, cysteine 22, cysteine 25, cysteine 27, and cysteine 30. Residues 31 to 68 (KKSCCSCCPAECEKCAKDCVCKGGEAAEAEAEKCSCCQ) are alpha. Residue serine 33 is modified to Phosphoserine. Residues cysteine 34, cysteine 35, cysteine 37, cysteine 38, cysteine 42, cysteine 45, cysteine 49, cysteine 51, cysteine 64, cysteine 66, and cysteine 67 each contribute to the a divalent metal cation site.

The protein belongs to the metallothionein superfamily. Type 1 family. In terms of tissue distribution, abundant in a subset of astrocytes in the normal human brain, but greatly reduced in the Alzheimer disease (AD) brain.

Functionally, binds heavy metals. Contains three zinc and three copper atoms per polypeptide chain and only a negligible amount of cadmium. Inhibits survival and neurite formation of cortical neurons in vitro. This is Metallothionein-3 (MT3) from Homo sapiens (Human).